A 561-amino-acid chain; its full sequence is Cloacin (561 aa).

Composition is skewed to gly residues over residues 1–21, 29–40, and 66–91; these read MSGGDGRGPGNSGLGHNGGQA, SGKGGPSSGGGT, and FGNGGSKPGGNGGNSGNHSGSSGGGQ. 5 disordered regions span residues 1 to 93, 254 to 273, 304 to 326, 432 to 507, and 530 to 561; these read MSGG…GQSS, PKGIVAEKGDSRPAGFTAGG, VKQRQEEEKRRQQAWDAAHPEEG, KAAL…KRAR, and RASDGEHLGAFDPKTGKQVKGPDPKRNIKKYL. The involved in the translocation of the protein across the cell membrane stretch occupies residues 1 to 180; the sequence is MSGGDGRGPG…DTVTETPAST (180 aa). Residues 200–420 form a responsible for the receptor binding activity region; that stretch reads DERQHIAVVA…NAKLKAAQAS (221 aa). Composition is skewed to basic and acidic residues over residues 306–326 and 440–494; these read QRQEEEKRRQQAWDAAHPEEG and ESRK…EGKP. The segment at 421–561 is ribonuclease activity; that stretch reads LNAMNDALSR…DPKRNIKKYL (141 aa). The tract at residues 540 to 561 is binding of immunity protein; it reads FDPKTGKQVKGPDPKRNIKKYL.

This sequence belongs to the cloacin colicin family.

Inactivates ribosomes by hydrolyzing 16S RNA in 30S ribosomes at a specific site. Functionally, colicins are polypeptide toxins produced by and active against E.coli and closely related bacteria. This is Cloacin (ccl) from Escherichia coli.